A 483-amino-acid chain; its full sequence is Glutamate--tRNA ligase 1 (483 aa).

The 'HIGH' region signature appears at 9–19; it reads PSPTGFLHIGG. Positions 238 to 242 match the 'KMSKS' region motif; sequence KLSKR. Position 241 (Lys-241) interacts with ATP.

The protein belongs to the class-I aminoacyl-tRNA synthetase family. Glutamate--tRNA ligase type 1 subfamily. In terms of assembly, monomer.

The protein localises to the cytoplasm. It carries out the reaction tRNA(Glu) + L-glutamate + ATP = L-glutamyl-tRNA(Glu) + AMP + diphosphate. In terms of biological role, catalyzes the attachment of glutamate to tRNA(Glu) in a two-step reaction: glutamate is first activated by ATP to form Glu-AMP and then transferred to the acceptor end of tRNA(Glu). This Bartonella henselae (strain ATCC 49882 / DSM 28221 / CCUG 30454 / Houston 1) (Rochalimaea henselae) protein is Glutamate--tRNA ligase 1.